A 323-amino-acid chain; its full sequence is o-succinylbenzoate synthase (323 aa).

Lys134 functions as the Proton donor in the catalytic mechanism. Residues Asp162, Glu191, and Asp214 each coordinate Mg(2+). Lys236 (proton acceptor) is an active-site residue.

It belongs to the mandelate racemase/muconate lactonizing enzyme family. MenC type 1 subfamily. A divalent metal cation is required as a cofactor.

The catalysed reaction is (1R,6R)-6-hydroxy-2-succinyl-cyclohexa-2,4-diene-1-carboxylate = 2-succinylbenzoate + H2O. Its pathway is quinol/quinone metabolism; 1,4-dihydroxy-2-naphthoate biosynthesis; 1,4-dihydroxy-2-naphthoate from chorismate: step 4/7. It functions in the pathway quinol/quinone metabolism; menaquinone biosynthesis. Converts 2-succinyl-6-hydroxy-2,4-cyclohexadiene-1-carboxylate (SHCHC) to 2-succinylbenzoate (OSB). The protein is o-succinylbenzoate synthase of Pectobacterium atrosepticum (strain SCRI 1043 / ATCC BAA-672) (Erwinia carotovora subsp. atroseptica).